The chain runs to 491 residues: Cobyric acid synthase (491 aa).

Positions 250-439 constitute a GATase cobBQ-type domain; the sequence is ELNIIVIRLP…LHGIFDNGSW (190 aa). The Nucleophile role is filled by cysteine 331. Histidine 431 is a catalytic residue.

The protein belongs to the CobB/CobQ family. CobQ subfamily.

Its pathway is cofactor biosynthesis; adenosylcobalamin biosynthesis. Catalyzes amidations at positions B, D, E, and G on adenosylcobyrinic A,C-diamide. NH(2) groups are provided by glutamine, and one molecule of ATP is hydrogenolyzed for each amidation. The sequence is that of Cobyric acid synthase from Microcystis aeruginosa (strain NIES-843 / IAM M-2473).